The chain runs to 597 residues: Elongation factor 4 (597 aa).

The region spanning asparagine 2–lysine 184 is the tr-type G domain. Residues aspartate 14–threonine 19 and asparagine 131–aspartate 134 each bind GTP.

Belongs to the TRAFAC class translation factor GTPase superfamily. Classic translation factor GTPase family. LepA subfamily.

It localises to the cell inner membrane. The catalysed reaction is GTP + H2O = GDP + phosphate + H(+). Its function is as follows. Required for accurate and efficient protein synthesis under certain stress conditions. May act as a fidelity factor of the translation reaction, by catalyzing a one-codon backward translocation of tRNAs on improperly translocated ribosomes. Back-translocation proceeds from a post-translocation (POST) complex to a pre-translocation (PRE) complex, thus giving elongation factor G a second chance to translocate the tRNAs correctly. Binds to ribosomes in a GTP-dependent manner. The chain is Elongation factor 4 from Janthinobacterium sp. (strain Marseille) (Minibacterium massiliensis).